A 368-amino-acid chain; its full sequence is tRNA-specific 2-thiouridylase MnmA (368 aa).

ATP-binding positions include 10 to 17 (AMSGGVDS) and Met-36. The Nucleophile role is filled by Cys-108. Cys-108 and Cys-206 form a disulfide bridge. Residue Gly-132 coordinates ATP. The segment at 156–158 (KDQ) is interaction with tRNA. Cys-206 serves as the catalytic Cysteine persulfide intermediate. The segment at 312 to 313 (RY) is interaction with tRNA.

The protein belongs to the MnmA/TRMU family.

The protein resides in the cytoplasm. The enzyme catalyses S-sulfanyl-L-cysteinyl-[protein] + uridine(34) in tRNA + AH2 + ATP = 2-thiouridine(34) in tRNA + L-cysteinyl-[protein] + A + AMP + diphosphate + H(+). Its function is as follows. Catalyzes the 2-thiolation of uridine at the wobble position (U34) of tRNA, leading to the formation of s(2)U34. The sequence is that of tRNA-specific 2-thiouridylase MnmA from Natranaerobius thermophilus (strain ATCC BAA-1301 / DSM 18059 / JW/NM-WN-LF).